The primary structure comprises 211 residues: Large ribosomal subunit protein uL3 (211 aa).

It belongs to the universal ribosomal protein uL3 family. In terms of assembly, part of the 50S ribosomal subunit. Forms a cluster with proteins L14 and L19.

In terms of biological role, one of the primary rRNA binding proteins, it binds directly near the 3'-end of the 23S rRNA, where it nucleates assembly of the 50S subunit. The chain is Large ribosomal subunit protein uL3 from Desulfatibacillum aliphaticivorans.